The primary structure comprises 103 residues: Small ribosomal subunit protein uS10 (103 aa).

This sequence belongs to the universal ribosomal protein uS10 family. In terms of assembly, part of the 30S ribosomal subunit.

Involved in the binding of tRNA to the ribosomes. The polypeptide is Small ribosomal subunit protein uS10 (Syntrophobacter fumaroxidans (strain DSM 10017 / MPOB)).